The chain runs to 104 residues: Large ribosomal subunit protein bL21 (104 aa).

It belongs to the bacterial ribosomal protein bL21 family. In terms of assembly, part of the 50S ribosomal subunit. Contacts protein L20.

In terms of biological role, this protein binds to 23S rRNA in the presence of protein L20. In Lactococcus lactis subsp. cremoris (strain MG1363), this protein is Large ribosomal subunit protein bL21.